The primary structure comprises 426 residues: Glutamate-1-semialdehyde 2,1-aminomutase (426 aa).

Lys265 is subject to N6-(pyridoxal phosphate)lysine.

The protein belongs to the class-III pyridoxal-phosphate-dependent aminotransferase family. HemL subfamily. As to quaternary structure, homodimer. Pyridoxal 5'-phosphate serves as cofactor.

It localises to the cytoplasm. The catalysed reaction is (S)-4-amino-5-oxopentanoate = 5-aminolevulinate. The protein operates within porphyrin-containing compound metabolism; protoporphyrin-IX biosynthesis; 5-aminolevulinate from L-glutamyl-tRNA(Glu): step 2/2. The protein is Glutamate-1-semialdehyde 2,1-aminomutase of Pseudoalteromonas translucida (strain TAC 125).